We begin with the raw amino-acid sequence, 593 residues long: Probable tripeptidyl-peptidase SED3 (593 aa).

A signal peptide spans 1-18; sequence MLLRWHSVIPLFLAMTVA. Positions 19 to 198 are cleaved as a propeptide — removed in mature form; that stretch reads FPNTYRTVVE…NLQAIYLSTN (180 aa). N204, N261, and N275 each carry an N-linked (GlcNAc...) asparagine glycan. A Peptidase S53 domain is found at 206 to 592; the sequence is TITPRCLREL…RILAKIVQHM (387 aa). Active-site charge relay system residues include E282 and D286. Residue N295 is glycosylated (N-linked (GlcNAc...) asparagine). S496 acts as the Charge relay system in catalysis. Ca(2+) contacts are provided by D538 and I539. N-linked (GlcNAc...) asparagine glycosylation is found at N554 and N566. The Ca(2+) site is built by G570 and D572.

Requires Ca(2+) as cofactor.

The protein resides in the secreted. It localises to the extracellular space. It catalyses the reaction Release of an N-terminal tripeptide from a polypeptide.. Secreted tripeptidyl-peptidase which degrades proteins at acidic pHs and is involved in virulence. The polypeptide is Probable tripeptidyl-peptidase SED3 (SED3) (Arthroderma benhamiae (strain ATCC MYA-4681 / CBS 112371) (Trichophyton mentagrophytes)).